We begin with the raw amino-acid sequence, 331 residues long: NmrA-like family domain-containing oxidoreductase himF (331 aa).

NADP(+) is bound by residues 8–13 (GATGNQ), 34–38 (RNAES), 55–56 (DG), 76–78 (TNG), lysine 133, and 155–167 (WFFETFLEPQMAA).

This sequence belongs to the NmrA-type oxidoreductase family.

Its pathway is secondary metabolite biosynthesis. Functionally, nmrA-like family domain-containing oxidoreductase; part of the him gene cluster that mediates the biosynthesis of himeic acid A, a ubiquitin-activating enzyme (E1) inhibitor. First, himA, together with the trans-enoyl reductase himH, catalyzes the formation of apolyketide chain, which is then condensed with leucine by the NRPS activity of himA. Dieckmann cyclization and release from himA gives a tetramic acid intermediate as the product of himA PKS-NRPS. HimG then catalyzes alpha-oxidation of the tetramic acid ring, with a subsequent rearrangement to yield apyrone intermediate. Two terminal methyl groups of polyketide and amide side chains are oxidized to carboxylic acids by himC cytochrome P450 monooxygenase to form himeic acid A. Himeic acid A is further converted to himeic acid B and C during culture growth. No gene responsible for pyrone to pyridone conversion was found in the him gene cluster and himeic acid A is non-enzymatically converted to himeic acid C by the incorporation of an ammonium nitrogen atom in a pH5 buffer, and to himeic acid B at a conversion ratio of 50% during incubation in MeOH for 5 days. In Aspergillus japonicus, this protein is NmrA-like family domain-containing oxidoreductase himF.